Here is a 78-residue protein sequence, read N- to C-terminus: Ferredoxin 7Fe (78 aa).

4Fe-4S ferredoxin-type domains lie at 2-29 (AYVI…IHEG) and 31-60 (DQYY…HEDF). The [3Fe-4S] cluster site is built by C9 and C17. The [4Fe-4S] cluster site is built by C21, C40, C43, and C46. C50 lines the [3Fe-4S] cluster pocket.

As to quaternary structure, monomer. [4Fe-4S] cluster serves as cofactor. It depends on [3Fe-4S] cluster as a cofactor.

The sequence is that of Ferredoxin 7Fe (fdxA) from Hydrogenibacillus schlegelii (Bacillus schlegelii).